A 2238-amino-acid polypeptide reads, in one-letter code: Golgin subfamily A member 4 (2238 aa).

The tract at residues 1–90 (MFKKLKQKIS…QTFAQKLQLR (90 aa)) is disordered. Position 10 is a phosphoserine (Ser-10). Residues 12–41 (EQQQLQQALAPAQASSSSSTPTRTRSRTSS) show a composition bias toward low complexity. The residue at position 39 (Thr-39) is a Phosphothreonine. Ser-41 bears the Phosphoserine mark. Polar residues-rich tracts occupy residues 52–62 (NRENASTQATK) and 73–85 (SPSQSGDTQTFAQ). Residues Ser-93 and Ser-100 each carry the phosphoserine modification. Disordered regions lie at residues 132-154 (AAAFDPPSDMESEAEDAPWNSDG), 1695-1744 (LKER…SQDC), and 1770-1789 (LEQGEGEARPSQPEAQHRAL). Residues 154–224 (GLSREQLLQR…EELQMDQQAK (71 aa)) are interaction with MACF1. A coiled-coil region spans residues 156–2161 (SREQLLQRLR…RYEKNACAAT (2006 aa)). The segment covering 1695–1711 (LKEREKQVHSLEDKLKN) has biased composition (basic and acidic residues). The region spanning 2178 to 2225 (LFGEPTEFEYLRKVMFEYMMGRETKTMAKVITTVLKFPDDQAQKILER) is the GRIP domain.

Homodimer. Interacts with GTP-bound ARL1 and ARL3. Interacts with MACF1. Directly interacts with TBC1D23. Interacts with FAM91A1; this interaction may be mediated by TBC1D23. As to expression, ubiquitous. Highly expressed in oligodendrocyte precursors, particularly at a stage just prior to myelination.

It is found in the cytoplasm. The protein localises to the golgi apparatus membrane. Its subcellular location is the golgi apparatus. The protein resides in the trans-Golgi network membrane. Functionally, involved in vesicular trafficking at the Golgi apparatus level. May play a role in delivery of transport vesicles containing GPI-linked proteins from the trans-Golgi network through its interaction with MACF1. Involved in endosome-to-Golgi trafficking. In Mus musculus (Mouse), this protein is Golgin subfamily A member 4 (Golga4).